The primary structure comprises 198 residues: Recombination protein RecR (198 aa).

A C4-type zinc finger spans residues 57–72 (CSICGNITEEDPCEIC). Positions 80–175 (SIILVVEEPK…TVTRLAHGLS (96 aa)) constitute a Toprim domain.

The protein belongs to the RecR family.

May play a role in DNA repair. It seems to be involved in an RecBC-independent recombinational process of DNA repair. It may act with RecF and RecO. In Enterococcus faecalis (strain ATCC 700802 / V583), this protein is Recombination protein RecR.